Here is a 702-residue protein sequence, read N- to C-terminus: Phosphatase and actin regulator 4 (702 aa).

Disordered stretches follow at residues 1 to 38 (MEDP…SKFS), 82 to 194 (GVLL…SSGG), and 222 to 363 (NLSV…PFPA). Residues 63-88 (EVLERKISMRKPREELVKRGVLLEDP) form an RPEL 1 repeat. Positions 106–120 (GHTTPIGNARSSSPV) are enriched in polar residues. Residues Ser116, Ser118, Ser131, and Ser147 each carry the phosphoserine modification. The segment covering 147–156 (STGSQPNSEA) has biased composition (polar residues). Pro residues predominate over residues 163 to 173 (VPKPPLLPPKR). Residues 233–250 (TLPAAPASTNTTATPSLT) are compositionally biased toward low complexity. Residues Ser270 and Ser291 each carry the phosphoserine modification. Over residues 301–318 (PSTSVPTLESAAAITTKT) the composition is skewed to polar residues. 2 positions are modified to phosphoserine: Ser342 and Ser344. The segment covering 342 to 362 (SPSPPLPTHIPPEPPRTPPFP) has biased composition (pro residues). Thr358 carries the post-translational modification Phosphothreonine. Ser427 is subject to Phosphoserine. Position 432 is a phosphothreonine (Thr432). Phosphoserine occurs at positions 443, 453, and 464. The segment at 473-536 (KVPDDEEEEE…EEDEDESYQS (64 aa)) is disordered. The segment covering 486 to 497 (PSTFSEETTPTS) has biased composition (low complexity). Positions 508–518 (EEEEKESDSDS) are enriched in acidic residues. A phosphoserine mark is found at Ser514, Ser516, Ser557, and Ser590. RPEL repeat units follow at residues 583 to 608 (NTLI…QPKN) and 621 to 646 (RRLT…RFNE). The segment at 592 to 615 (RPTPEELEQRNILQPKNEADRQAE) is disordered. The residue at position 628 (Ser628) is a Phosphoserine.

This sequence belongs to the phosphatase and actin regulator family. Binds PPP1CA and actin.

It localises to the cytoplasm. It is found in the cell projection. The protein resides in the lamellipodium. In terms of biological role, regulator of protein phosphatase 1 (PP1) required for neural tube and optic fissure closure, and enteric neural crest cell (ENCCs) migration during development. Acts as an activator of PP1 by interacting with PPP1CA and preventing phosphorylation of PPP1CA at 'Thr-320'. During neural tube closure, localizes to the ventral neural tube and activates PP1, leading to down-regulate cell proliferation within cranial neural tissue and the neural retina. Also acts as a regulator of migration of enteric neural crest cells (ENCCs) by activating PP1, leading to dephosphorylation and subsequent activation of cofilin (COF1 or COF2) and repression of the integrin signaling through the RHO/ROCK pathway. The protein is Phosphatase and actin regulator 4 (PHACTR4) of Pongo abelii (Sumatran orangutan).